The following is a 253-amino-acid chain: Ubiquinone/menaquinone biosynthesis C-methyltransferase UbiE (253 aa).

Residues Thr76, Asp97, 125-126 (NA), and Ser142 each bind S-adenosyl-L-methionine.

It belongs to the class I-like SAM-binding methyltransferase superfamily. MenG/UbiE family.

The enzyme catalyses a 2-demethylmenaquinol + S-adenosyl-L-methionine = a menaquinol + S-adenosyl-L-homocysteine + H(+). It carries out the reaction a 2-methoxy-6-(all-trans-polyprenyl)benzene-1,4-diol + S-adenosyl-L-methionine = a 5-methoxy-2-methyl-3-(all-trans-polyprenyl)benzene-1,4-diol + S-adenosyl-L-homocysteine + H(+). It participates in quinol/quinone metabolism; menaquinone biosynthesis; menaquinol from 1,4-dihydroxy-2-naphthoate: step 2/2. It functions in the pathway cofactor biosynthesis; ubiquinone biosynthesis. Methyltransferase required for the conversion of demethylmenaquinol (DMKH2) to menaquinol (MKH2) and the conversion of 2-polyprenyl-6-methoxy-1,4-benzoquinol (DDMQH2) to 2-polyprenyl-3-methyl-6-methoxy-1,4-benzoquinol (DMQH2). This Xylella fastidiosa (strain 9a5c) protein is Ubiquinone/menaquinone biosynthesis C-methyltransferase UbiE.